The following is an 881-amino-acid chain: DNA replication helicase (881 aa).

The tract at residues 1–32 (MESADILPGSRGTVDRRCEGSEEKITPPRPVE) is disordered. Positions 13 to 32 (TVDRRCEGSEEKITPPRPVE) are enriched in basic and acidic residues. 105 to 112 (GNAGSGKS) lines the ATP pocket.

This sequence belongs to the herpesviridae helicase family. In terms of assembly, associates with the primase and the primase-associated factor to form the helicase-primase complex.

Its subcellular location is the host nucleus. Functionally, component of the helicase/primase complex. Unwinds the DNA at the replication forks and generates single-stranded DNA for both leading and lagging strand synthesis. The primase synthesizes short RNA primers on the lagging strand that the polymerase elongates using dNTPs. Possesses helicase-like motifs and therefore may act as the helicase subunit of the complex. In Equus caballus (Horse), this protein is DNA replication helicase.